A 245-amino-acid polypeptide reads, in one-letter code: tRNA pseudouridine synthase A (245 aa).

Catalysis depends on Asp-52, which acts as the Nucleophile. Position 110 (Tyr-110) interacts with substrate.

It belongs to the tRNA pseudouridine synthase TruA family. Homodimer.

It catalyses the reaction uridine(38/39/40) in tRNA = pseudouridine(38/39/40) in tRNA. In terms of biological role, formation of pseudouridine at positions 38, 39 and 40 in the anticodon stem and loop of transfer RNAs. This chain is tRNA pseudouridine synthase A, found in Borrelia hermsii (strain HS1 / DAH).